The primary structure comprises 60 residues: Large ribosomal subunit protein bL32 (60 aa).

Belongs to the bacterial ribosomal protein bL32 family.

The polypeptide is Large ribosomal subunit protein bL32 (Oenococcus oeni (strain ATCC BAA-331 / PSU-1)).